A 411-amino-acid polypeptide reads, in one-letter code: UPF0761 membrane protein PLES_43641 (411 aa).

6 helical membrane passes run 36-56, 92-112, 132-152, 174-194, 207-229, and 244-264; these read LFAVVPMMTVMFSMLSLIPAF, HLTWVGVVFLAVTAFTMLVTI, FLLYWAILSLGPLLLGAGFAV, LLGLMPLAFSVAAFTLLYSAV, GGVFTAVLFEAAKTLFGLYVSLF, and IFLLWIYLSWMIVLFGAVLVC.

It belongs to the UPF0761 family.

It is found in the cell inner membrane. This is UPF0761 membrane protein PLES_43641 from Pseudomonas aeruginosa (strain LESB58).